Consider the following 196-residue polypeptide: UPF0301 protein BT_1078 (196 aa).

The protein belongs to the UPF0301 (AlgH) family.

In Bacteroides thetaiotaomicron (strain ATCC 29148 / DSM 2079 / JCM 5827 / CCUG 10774 / NCTC 10582 / VPI-5482 / E50), this protein is UPF0301 protein BT_1078.